Here is a 170-residue protein sequence, read N- to C-terminus: Ribosome maturation factor RimM (170 aa).

The 74-residue stretch at 97–170 folds into the PRC barrel domain; sequence KNEFYWTDLI…QIRVEWGSDW (74 aa).

Belongs to the RimM family. Binds ribosomal protein uS19.

It localises to the cytoplasm. An accessory protein needed during the final step in the assembly of 30S ribosomal subunit, possibly for assembly of the head region. Essential for efficient processing of 16S rRNA. May be needed both before and after RbfA during the maturation of 16S rRNA. It has affinity for free ribosomal 30S subunits but not for 70S ribosomes. This is Ribosome maturation factor RimM from Dechloromonas aromatica (strain RCB).